The primary structure comprises 698 residues: Elongation factor G 1 (698 aa).

A tr-type G domain is found at 8–290 (ERYRNIGIVA…AVVDYLPAPI (283 aa)). GTP is bound by residues 17–24 (AHVDAGKT), 88–92 (DTPGH), and 142–145 (NKMD).

It belongs to the TRAFAC class translation factor GTPase superfamily. Classic translation factor GTPase family. EF-G/EF-2 subfamily.

The protein resides in the cytoplasm. Functionally, catalyzes the GTP-dependent ribosomal translocation step during translation elongation. During this step, the ribosome changes from the pre-translocational (PRE) to the post-translocational (POST) state as the newly formed A-site-bound peptidyl-tRNA and P-site-bound deacylated tRNA move to the P and E sites, respectively. Catalyzes the coordinated movement of the two tRNA molecules, the mRNA and conformational changes in the ribosome. In Shewanella denitrificans (strain OS217 / ATCC BAA-1090 / DSM 15013), this protein is Elongation factor G 1.